Reading from the N-terminus, the 204-residue chain is Transcriptional regulator GfcR 1 (204 aa).

The protein belongs to the purine/pyrimidine phosphoribosyltransferase family. GfcR subfamily.

This Methanosarcina barkeri (strain Fusaro / DSM 804) protein is Transcriptional regulator GfcR 1.